We begin with the raw amino-acid sequence, 339 residues long: Ketol-acid reductoisomerase (NADP(+)) (339 aa).

The KARI N-terminal Rossmann domain maps to 1-182; the sequence is MRVYYDRDAD…GGGRSGVIET (182 aa). NADP(+) is bound by residues 24 to 27, arginine 48, serine 51, threonine 53, and 83 to 86; these read YGSQ and DELQ. Histidine 108 is an active-site residue. Residue glycine 134 coordinates NADP(+). One can recognise a KARI C-terminal knotted domain in the interval 183 to 328; sequence TFKEECETDL…EKLRGMMPWI (146 aa). Aspartate 191, glutamate 195, glutamate 227, and glutamate 231 together coordinate Mg(2+). Residue serine 252 coordinates substrate.

The protein belongs to the ketol-acid reductoisomerase family. Mg(2+) serves as cofactor.

The catalysed reaction is (2R)-2,3-dihydroxy-3-methylbutanoate + NADP(+) = (2S)-2-acetolactate + NADPH + H(+). The enzyme catalyses (2R,3R)-2,3-dihydroxy-3-methylpentanoate + NADP(+) = (S)-2-ethyl-2-hydroxy-3-oxobutanoate + NADPH + H(+). It participates in amino-acid biosynthesis; L-isoleucine biosynthesis; L-isoleucine from 2-oxobutanoate: step 2/4. It functions in the pathway amino-acid biosynthesis; L-valine biosynthesis; L-valine from pyruvate: step 2/4. In terms of biological role, involved in the biosynthesis of branched-chain amino acids (BCAA). Catalyzes an alkyl-migration followed by a ketol-acid reduction of (S)-2-acetolactate (S2AL) to yield (R)-2,3-dihydroxy-isovalerate. In the isomerase reaction, S2AL is rearranged via a Mg-dependent methyl migration to produce 3-hydroxy-3-methyl-2-ketobutyrate (HMKB). In the reductase reaction, this 2-ketoacid undergoes a metal-dependent reduction by NADPH to yield (R)-2,3-dihydroxy-isovalerate. The protein is Ketol-acid reductoisomerase (NADP(+)) of Brucella anthropi (strain ATCC 49188 / DSM 6882 / CCUG 24695 / JCM 21032 / LMG 3331 / NBRC 15819 / NCTC 12168 / Alc 37) (Ochrobactrum anthropi).